The sequence spans 234 residues: Hydrolase in agr operon (234 aa).

Residues 1–212 (ILYNKDTDVV…EKELTVTIDI (212 aa)) form the CN hydrolase domain. E14 (proton acceptor) is an active-site residue. Residue K83 is the Proton donor of the active site. C119 serves as the catalytic Nucleophile.

Belongs to the carbon-nitrogen hydrolase superfamily. NIT1/NIT2 family.

This chain is Hydrolase in agr operon, found in Staphylococcus lugdunensis.